A 473-amino-acid chain; its full sequence is RUN domain-containing protein 3B (473 aa).

The segment at 1 to 24 (MASRSLGGLSGIRGGGGGGGKKSL) is disordered. Gly residues predominate over residues 8–21 (GLSGIRGGGGGGGK). Position 13 is an omega-N-methylarginine (Arg13). One can recognise an RUN domain in the interval 57–206 (DDSSPEFNNF…IDFSFCLKGE (150 aa)). Residues Ser232 and Ser233 each carry the phosphoserine modification. Positions 317–342 (AHKLEKEQLEYIIVELQDQLTVLKNN) form a coiled coil. Positions 399 to 422 (SLSQTSLDPGQSQEGDGKQDTLNV) are enriched in polar residues. Residues 399 to 428 (SLSQTSLDPGQSQEGDGKQDTLNVMSEGKE) are disordered.

It belongs to the RUNDC3 family. In terms of assembly, interacts with RAP2A. In terms of tissue distribution, isoform 2 is expressed at high levels in brain, thymus, ovary, testis, leukocyte, liver, small intestine and prostate. Isoform 1 is expressed in the brain, testis and adrenal gland. It is activated in tumorigenic breast cancer cell lines and in the primary tumor of breast cancer patients. Activation also correlates with metastatic lymph node invasion and can be detected in metastatic epithelial cells from the lymph nodes and in the bone marrow of patients.

This Homo sapiens (Human) protein is RUN domain-containing protein 3B (RUNDC3B).